Reading from the N-terminus, the 363-residue chain is Peptide chain release factor 2 (363 aa).

Gln-251 carries the N5-methylglutamine modification.

Belongs to the prokaryotic/mitochondrial release factor family. In terms of processing, methylated by PrmC. Methylation increases the termination efficiency of RF2.

It localises to the cytoplasm. Functionally, peptide chain release factor 2 directs the termination of translation in response to the peptide chain termination codons UGA and UAA. The chain is Peptide chain release factor 2 from Helicobacter pylori (strain P12).